The primary structure comprises 270 residues: 5'-nucleotidase SurE (270 aa).

A divalent metal cation-binding residues include Asp14, Asp15, Ser46, and Asn104.

The protein belongs to the SurE nucleotidase family. Requires a divalent metal cation as cofactor.

It localises to the cytoplasm. It carries out the reaction a ribonucleoside 5'-phosphate + H2O = a ribonucleoside + phosphate. Nucleotidase that shows phosphatase activity on nucleoside 5'-monophosphates. The sequence is that of 5'-nucleotidase SurE from Microcystis aeruginosa (strain NIES-843 / IAM M-2473).